A 449-amino-acid polypeptide reads, in one-letter code: UPF0761 membrane protein Cpha266_1653 (449 aa).

Transmembrane regions (helical) follow at residues 77–97, 133–153, 173–193, 214–234, 244–264, and 277–297; these read LLSL…FPVF, SVPL…ISTI, FTLY…SLVA, LLSF…YMLV, AVYG…WFVF, and GALS…VVVL.

The protein belongs to the UPF0761 family.

The protein resides in the cell inner membrane. The protein is UPF0761 membrane protein Cpha266_1653 of Chlorobium phaeobacteroides (strain DSM 266 / SMG 266 / 2430).